Reading from the N-terminus, the 386-residue chain is Endonuclease III homolog 2, chloroplastic (386 aa).

A chloroplast-targeting transit peptide spans 1–50 (MILTGAASTFPIVARVLNAMNRRMYAATTLSSAKSISAESLNLRSDSNSE). The tract at residues 44-66 (RSDSNSEAAHGASESETRVSLRK) is disordered. Positions 252–278 (YDGDIPRTLEELLSLPGVGPKIAHLVL) constitute a HhH domain. The active-site Nucleophile; for N-glycosylase activity is lysine 272. Cysteine 347, cysteine 354, cysteine 357, and cysteine 363 together coordinate [4Fe-4S] cluster.

Belongs to the Nth/MutY family. The cofactor is [4Fe-4S] cluster.

The protein localises to the plastid. The protein resides in the chloroplast stroma. Its subcellular location is the chloroplast nucleoid. It carries out the reaction 2'-deoxyribonucleotide-(2'-deoxyribose 5'-phosphate)-2'-deoxyribonucleotide-DNA = a 3'-end 2'-deoxyribonucleotide-(2,3-dehydro-2,3-deoxyribose 5'-phosphate)-DNA + a 5'-end 5'-phospho-2'-deoxyribonucleoside-DNA + H(+). In terms of biological role, bifunctional DNA N-glycosylase with associated apurinic/apyrimidinic (AP) lyase function that catalyzes the first step in base excision repair (BER), the primary repair pathway for the repair of oxidative DNA damage. The DNA N-glycosylase activity releases the damaged DNA base from DNA by cleaving the N-glycosidic bond, leaving an AP site. The AP lyase activity cleaves the phosphodiester bond 3' to the AP site by a beta-elimination. Primarily recognizes and repairs oxidative base damage of pyrimidines. This is Endonuclease III homolog 2, chloroplastic (NTH2) from Arabidopsis thaliana (Mouse-ear cress).